We begin with the raw amino-acid sequence, 724 residues long: Acyl-coenzyme A oxidase 2 (724 aa).

The interval 1-48 (MAMLSQPNDGHDHPEKKDPDTTPKQVAGVISSQDPPHPAKDVAEERAR) is disordered. Basic and acidic residues-rich tracts occupy residues 9 to 21 (DGHD…DPDT) and 37 to 48 (HPAKDVAEERAR).

Belongs to the acyl-CoA oxidase family. FAD is required as a cofactor.

Its subcellular location is the peroxisome. It catalyses the reaction a 2,3-saturated acyl-CoA + O2 = a (2E)-enoyl-CoA + H2O2. It functions in the pathway lipid metabolism; peroxisomal fatty acid beta-oxidation. The chain is Acyl-coenzyme A oxidase 2 (POX2) from Candida tropicalis (Yeast).